Consider the following 151-residue polypeptide: D-aminoacyl-tRNA deacylase (151 aa).

A Gly-cisPro motif, important for rejection of L-amino acids motif is present at residues 138–139 (GP).

Belongs to the DTD family. As to quaternary structure, homodimer.

The protein localises to the cytoplasm. The enzyme catalyses glycyl-tRNA(Ala) + H2O = tRNA(Ala) + glycine + H(+). The catalysed reaction is a D-aminoacyl-tRNA + H2O = a tRNA + a D-alpha-amino acid + H(+). An aminoacyl-tRNA editing enzyme that deacylates mischarged D-aminoacyl-tRNAs. Also deacylates mischarged glycyl-tRNA(Ala), protecting cells against glycine mischarging by AlaRS. Acts via tRNA-based rather than protein-based catalysis; rejects L-amino acids rather than detecting D-amino acids in the active site. By recycling D-aminoacyl-tRNA to D-amino acids and free tRNA molecules, this enzyme counteracts the toxicity associated with the formation of D-aminoacyl-tRNA entities in vivo and helps enforce protein L-homochirality. This Magnetococcus marinus (strain ATCC BAA-1437 / JCM 17883 / MC-1) protein is D-aminoacyl-tRNA deacylase.